The sequence spans 225 residues: NAD(P)H-hydrate epimerase (225 aa).

Positions 9–209 (MQTIDNYTVE…DIGLLTPQDF (201 aa)) constitute a YjeF N-terminal domain. Residue 57-61 (NNGAD) coordinates (6S)-NADPHX. Residues Asn-58 and Asp-119 each contribute to the K(+) site. (6S)-NADPHX contacts are provided by residues 123–129 (GTGLNNL) and Asp-152. Thr-155 is a binding site for K(+).

The protein belongs to the NnrE/AIBP family. It depends on K(+) as a cofactor.

The catalysed reaction is (6R)-NADHX = (6S)-NADHX. It carries out the reaction (6R)-NADPHX = (6S)-NADPHX. Its function is as follows. Catalyzes the epimerization of the S- and R-forms of NAD(P)HX, a damaged form of NAD(P)H that is a result of enzymatic or heat-dependent hydration. This is a prerequisite for the S-specific NAD(P)H-hydrate dehydratase to allow the repair of both epimers of NAD(P)HX. This chain is NAD(P)H-hydrate epimerase, found in Leuconostoc kimchii (strain IMSNU 11154 / KCTC 2386 / IH25).